Consider the following 365-residue polypeptide: MTENHYLLLTPGPLTTTKTVKEVMLYDWCTWDVEYNMMVQQVRAKLVSLATKEEERYTTVLMQGSGTFSVEAVIGSVIPKNGKMLVCTNGAYGKRIVQMAEMLHIDVVVSQTEEWEPTNIVEVEKILQQDKEITHIAVVHCETTTGIINPIVDVCKLGKQYGKVTLVDAMSSFGGIEIDIAELQIDFLISSANKCIQGVPGFGFVIAKRDELLKCKGQARSLSLDLYDQWETMENQNGKWRFTSPTHVVHAFYQALLELEKEGGVKARYNRYDNNQKLLVNRMREIGFKPLVDEKYQSPIITSFIYPEEWFDFEQLYNELKRDGFVIYPGKISKVDTFRIGNIGDVHEADIHRLVDSIAKGVVIG.

The residue at position 194 (Lys-194) is an N6-(pyridoxal phosphate)lysine.

It belongs to the class-V pyridoxal-phosphate-dependent aminotransferase family. PhnW subfamily. As to quaternary structure, homodimer. The cofactor is pyridoxal 5'-phosphate.

The catalysed reaction is (2-aminoethyl)phosphonate + pyruvate = phosphonoacetaldehyde + L-alanine. Its function is as follows. Involved in phosphonate degradation. This chain is 2-aminoethylphosphonate--pyruvate transaminase, found in Bacillus cereus (strain Q1).